The chain runs to 396 residues: Gap junction gamma-1 protein (396 aa).

At 1–18 (MSWSFLTRLLEEIHNHST) the chain is on the cytoplasmic side. Residues 19 to 39 (FVGKIWLTVLIVFRIVLTAVG) traverse the membrane as a helical segment. Residues 40–75 (GESIYYDEQSKFVCNTEQPGCENVCYDAFAPLSHVR) are Extracellular-facing. The chain crosses the membrane as a helical span at residues 76-96 (FWVFQIILVATPSVMYLGYAI). The Cytoplasmic portion of the chain corresponds to 97-175 (HKIAKMEHGE…RRIREDGLMK (79 aa)). The segment at 145–165 (ELESEKENKEQSQPKPKHDGR) is disordered. Over residues 147–156 (ESEKENKEQS) the composition is skewed to basic and acidic residues. A helical membrane pass occupies residues 176–198 (IYVLQLLARTVFEVGFLIGQYFL). Over 199 to 229 (YGFQVHPFYVCSRLPCPHKIDCFISRPTEKT) the chain is Extracellular. Residues 230–250 (IFLLIMYGVTGLCLLLNIWEM) form a helical membrane-spanning segment. At 251–396 (LHLGFGTIRD…SGDGKTSVWI (146 aa)) the chain is on the cytoplasmic side. A coiled-coil region spans residues 303-358 (ELSNAKIAYKQNKANIAQEQQYGSHEEHLPADLETLQREIRMAQERLDLAIQAYHH). Residues 357–396 (HHQNNPHGPREKKAKVGSKSGSNKSSISSKSGDGKTSVWI) are disordered. Low complexity predominate over residues 373–396 (GSKSGSNKSSISSKSGDGKTSVWI).

Belongs to the connexin family. Gamma-type subfamily. A connexon is composed of a hexamer of connexins. Interacts with CNST.

The protein resides in the cell membrane. Its subcellular location is the cell junction. It is found in the gap junction. Functionally, one gap junction consists of a cluster of closely packed pairs of transmembrane channels, the connexons, through which materials of low MW diffuse from one cell to a neighboring cell. This Cricetulus griseus (Chinese hamster) protein is Gap junction gamma-1 protein (GJC1).